A 647-amino-acid chain; its full sequence is MSSTEGGAKRVAEDGSEVSEAKRVGRIEGVAQLKPEYVVAGAAQLRAAESDEELTSERMVEPEGGTRKKSKKARGQNKNRDNRQAKEEHQLCPRLAQGNADACAFGAQCRYLHDVRTYLEHKTAEIECPQFTGCPVFAATGRCPMGFKCRFLSSHCNMETLELATTPEDERAKLWSVNHEVNHIASDRKLDLVKRRAPFPRSEHVLEIIDAIQQEFRDEMQGAAAAPEGAVAEVPQVQQREEQLSNKRARQRELYAQYHETRYFAQEKKPLDLHHKKIVSPLTTVGNLPFRRLMRQLGADVTYSEMALAVPLIQGTNSEWALPKAHCSELPGFGVQLACSKPWQAAKAAEALADNVGDGLSEINLNSGCPIDLLYRQGSGSALLDNPARMIRCLNAMNYVSKDVPVSVKLRTGTRDGHPIALGLCKRLVMETDVAAITLHGRTRQQRYTRSADWDYVGQVADALRSYETERAEKLKDREGKLRIQFVGNGDCNNWEDWYRHLENENVDSVMVARGALIKPWIFEEVDARQYIDKSSSERLEILRDYARFSMDHWGTDEYGIALCRRYFCEFMSFFHRYVPMGICERYPVLLNERPPNWRGRDDLETLLGSTDAADWIKLSEQFFGPTPDKFVFQPKHKSNSYAPSVQ.

Disordered regions lie at residues 1 to 26 (MSSTEGGAKRVAEDGSEVSEAKRVGR) and 47 to 89 (AAES…KEEH). Basic and acidic residues-rich tracts occupy residues 7-26 (GAKRVAEDGSEVSEAKRVGR) and 55-66 (TSERMVEPEGGT). Residues 67-77 (RKKSKKARGQN) show a composition bias toward basic residues. A compositionally biased stretch (basic and acidic residues) spans 78–89 (KNRDNRQAKEEH). 2 consecutive C3H1-type zinc fingers follow at residues 86-116 (KEEHQLCPRLAQGNADACAFGAQCRYLHDVR) and 122-158 (KTAEIECPQFTGCPVFAATGRCPMGFKCRFLSSHCNM). FMN contacts are provided by residues 281-283 (PLT) and Q336. C369 functions as the Proton donor in the catalytic mechanism. FMN contacts are provided by residues K409, H440, 489–491 (NGD), and 513–514 (AR).

It belongs to the Dus family. Dus3 subfamily. FMN is required as a cofactor.

The protein resides in the cytoplasm. Its subcellular location is the nucleus. It catalyses the reaction 5,6-dihydrouridine(47) in tRNA + NAD(+) = uridine(47) in tRNA + NADH + H(+). The enzyme catalyses 5,6-dihydrouridine(47) in tRNA + NADP(+) = uridine(47) in tRNA + NADPH + H(+). It carries out the reaction a 5,6-dihydrouridine in mRNA + NAD(+) = a uridine in mRNA + NADH + H(+). The catalysed reaction is a 5,6-dihydrouridine in mRNA + NADP(+) = a uridine in mRNA + NADPH + H(+). In terms of biological role, catalyzes the synthesis of dihydrouridine, a modified base found in the D-loop of most tRNAs. Specifically modifies U47 in cytoplasmic tRNAs. Catalyzes the synthesis of dihydrouridine in some mRNAs, thereby affecting their translation. The polypeptide is tRNA-dihydrouridine(47) synthase [NAD(P)(+)] (DUS3) (Eremothecium gossypii (strain ATCC 10895 / CBS 109.51 / FGSC 9923 / NRRL Y-1056) (Yeast)).